A 476-amino-acid chain; its full sequence is 3-isopropylmalate dehydratase large subunit (476 aa).

The [4Fe-4S] cluster site is built by Cys-347, Cys-407, and Cys-410. The interval 418 to 442 is disordered; it reads LAPGERSASTSNRNFEGRQGKGGRT.

Belongs to the aconitase/IPM isomerase family. LeuC type 1 subfamily. As to quaternary structure, heterodimer of LeuC and LeuD. Requires [4Fe-4S] cluster as cofactor.

The enzyme catalyses (2R,3S)-3-isopropylmalate = (2S)-2-isopropylmalate. It functions in the pathway amino-acid biosynthesis; L-leucine biosynthesis; L-leucine from 3-methyl-2-oxobutanoate: step 2/4. Its function is as follows. Catalyzes the isomerization between 2-isopropylmalate and 3-isopropylmalate, via the formation of 2-isopropylmaleate. The protein is 3-isopropylmalate dehydratase large subunit of Streptomyces coelicolor (strain ATCC BAA-471 / A3(2) / M145).